Consider the following 234-residue polypeptide: 3-dehydroquinate dehydratase (234 aa).

Residues 33–35 (EWR) and R68 contribute to the 3-dehydroquinate site. H124 serves as the catalytic Proton donor/acceptor. The Schiff-base intermediate with substrate role is filled by K151. Residues R193, S214, and Q218 each contribute to the 3-dehydroquinate site.

Belongs to the type-I 3-dehydroquinase family. In terms of assembly, homodimer.

It catalyses the reaction 3-dehydroquinate = 3-dehydroshikimate + H2O. It functions in the pathway metabolic intermediate biosynthesis; chorismate biosynthesis; chorismate from D-erythrose 4-phosphate and phosphoenolpyruvate: step 3/7. Involved in the third step of the chorismate pathway, which leads to the biosynthesis of aromatic amino acids. Catalyzes the cis-dehydration of 3-dehydroquinate (DHQ) and introduces the first double bond of the aromatic ring to yield 3-dehydroshikimate. The protein is 3-dehydroquinate dehydratase of Syntrophobacter fumaroxidans (strain DSM 10017 / MPOB).